A 242-amino-acid polypeptide reads, in one-letter code: Type III pantothenate kinase (242 aa).

Residue 5–12 coordinates ATP; that stretch reads DLGNTRLK. Residues tyrosine 94 and 100–103 contribute to the substrate site; that span reads GCDR. The active-site Proton acceptor is aspartate 102. An ATP-binding site is contributed by threonine 124. Position 175 (threonine 175) interacts with substrate.

Belongs to the type III pantothenate kinase family. In terms of assembly, homodimer. NH4(+) is required as a cofactor. The cofactor is K(+).

The protein localises to the cytoplasm. The enzyme catalyses (R)-pantothenate + ATP = (R)-4'-phosphopantothenate + ADP + H(+). It participates in cofactor biosynthesis; coenzyme A biosynthesis; CoA from (R)-pantothenate: step 1/5. Functionally, catalyzes the phosphorylation of pantothenate (Pan), the first step in CoA biosynthesis. The chain is Type III pantothenate kinase from Psychrobacter cryohalolentis (strain ATCC BAA-1226 / DSM 17306 / VKM B-2378 / K5).